The following is a 564-amino-acid chain: O-fucosyltransferase 6 (564 aa).

A helical; Signal-anchor for type II membrane protein transmembrane segment spans residues 17-37; it reads LLPFICAVSGALLILFALLSI. 2 N-linked (GlcNAc...) asparagine glycosylation sites follow: Asn-95 and Asn-139. 277 to 279 is a binding site for substrate; sequence HLR. Asn-449 carries an N-linked (GlcNAc...) asparagine glycan. Basic and acidic residues predominate over residues 501-512; that stretch reads MDSRKFGKKEQK. Residues 501–542 form a disordered region; sequence MDSRKFGKKEQKEDEDAELSSSETDYEEDQTDLQDRGLYNGT. The span at 513–532 shows a compositional bias: acidic residues; it reads EDEDAELSSSETDYEEDQTD. N-linked (GlcNAc...) asparagine glycosylation occurs at Asn-540.

This sequence belongs to the glycosyltransferase GT106 family.

The protein localises to the membrane. The protein operates within glycan metabolism. In Arabidopsis thaliana (Mouse-ear cress), this protein is O-fucosyltransferase 6.